Here is a 423-residue protein sequence, read N- to C-terminus: MTNKLIIQGGKKLAGTLQVDGAKNSAVALIPAAILAESEVVLEGLPDISDVYTLYDILEELGGSVRYDNKTAVIDPADMISMPLPTGNVKKLRASYYLMGAMLGRFKKAVIGLPGGCYLGPRPIDQHIKGFEALGAKVTNEQGAIYLRADELKGARIYLDVVSVGATINIMLAAVRAKGKTIIENAAKEPEIIDVATLLSNMGAIIKGAGTDTIRITGVEHLHGCHHTIIPDRIEAGTFMVLAAASGKGVRIENVIPTHLEGIIAKMTEMGIPMDIEEDAIFVGEVEKIKKVDIKTYAYPGFPTDLQQPLTALLTRAEGSSVVTDTIYPSRFKHIAEIERMGGKFKLEGRSAVVSGPVKLQGSKVTATDLRAGAALVIAGLLAEGTTEIHGVEHIERGYSKIIEKLSAIGADITRSTAAETKL.

23–24 provides a ligand contact to phosphoenolpyruvate; it reads KN. R93 contributes to the UDP-N-acetyl-alpha-D-glucosamine binding site. The Proton donor role is filled by C117. C117 carries the 2-(S-cysteinyl)pyruvic acid O-phosphothioketal modification. Residues 122-126, D305, and I327 contribute to the UDP-N-acetyl-alpha-D-glucosamine site; that span reads RPIDQ.

This sequence belongs to the EPSP synthase family. MurA subfamily.

Its subcellular location is the cytoplasm. The enzyme catalyses phosphoenolpyruvate + UDP-N-acetyl-alpha-D-glucosamine = UDP-N-acetyl-3-O-(1-carboxyvinyl)-alpha-D-glucosamine + phosphate. Its pathway is cell wall biogenesis; peptidoglycan biosynthesis. In terms of biological role, cell wall formation. Adds enolpyruvyl to UDP-N-acetylglucosamine. This is UDP-N-acetylglucosamine 1-carboxyvinyltransferase 2 from Listeria innocua serovar 6a (strain ATCC BAA-680 / CLIP 11262).